Reading from the N-terminus, the 532-residue chain is MSSLCASNCYPSSSSINLFSNNNNPTKPFLLSLRFASSNSLPFVAPLKFSTTNHVLSNSRFSSNRIQRRLFLLRCVSEESQPSLSIGNGGSEERVNVLVIGGGGREHALCHALKRSPSCDSVLCAPGNAGISSSGDATCVPDLDISDSLAVISFCQKWNVGLVVVGPEVPLVAGLANDLVKAGILTFGPSSQAAALEGSKNFMKNLCHKYNIPTAKYKTFSDASAAKEYIQEQGAPIVIKADGLAAGKGVTVAMELEEAFEAVDSMLVKGVFGSAGCQVVVEEFLEGEEASFFALVDGENAIPLESAQDHKRVGDGDTGPNTGGMGAYSPAPVLTKELQDFVMESIIHPTVKGMAEEGCKFVGVLFAGLMIEKKSGLPKLIEFNVRFGDPECQVLMMRLESDLAKVLLAACKGELSGVSLDWSKDSAMVVVMASNGYPGSYEKGSIIKNLEEAERVAPGVKVFHAGTGLDSEGNVVATGGRVLGVTAKGKDLEEARERAYSAVQQINWPGGFFRHDIGWRALRQKQVATKEE.

The transit peptide at 1 to 75 directs the protein to the chloroplast; that stretch reads MSSLCASNCY…IQRRLFLLRC (75 aa). The region spanning 204–412 is the ATP-grasp domain; sequence KNLCHKYNIP…LAKVLLAACK (209 aa).

The protein belongs to the GARS family.

The protein resides in the plastid. The protein localises to the chloroplast. The catalysed reaction is 5-phospho-beta-D-ribosylamine + glycine + ATP = N(1)-(5-phospho-beta-D-ribosyl)glycinamide + ADP + phosphate + H(+). It functions in the pathway purine metabolism; IMP biosynthesis via de novo pathway; N(1)-(5-phospho-D-ribosyl)glycinamide from 5-phospho-alpha-D-ribose 1-diphosphate: step 2/2. The polypeptide is Phosphoribosylamine--glycine ligase, chloroplastic (PUR2) (Arabidopsis thaliana (Mouse-ear cress)).